The sequence spans 362 residues: Molybdenum import ATP-binding protein ModC (362 aa).

The region spanning 2-236 (VSPIEVRLQM…LDLPLAMGDD (235 aa)) is the ABC transporter domain. Position 34–41 (34–41 (GPSGSGKT)) interacts with ATP. One can recognise a Mop domain in the interval 297–362 (HSSILNRLPV…AQIKAVAVLA (66 aa)).

The protein belongs to the ABC transporter superfamily. Molybdate importer (TC 3.A.1.8) family. As to quaternary structure, the complex is composed of two ATP-binding proteins (ModC), two transmembrane proteins (ModB) and a solute-binding protein (ModA).

It is found in the cell inner membrane. The enzyme catalyses molybdate(out) + ATP + H2O = molybdate(in) + ADP + phosphate + H(+). Its function is as follows. Part of the ABC transporter complex ModABC involved in molybdenum import. Responsible for energy coupling to the transport system. This is Molybdenum import ATP-binding protein ModC from Pseudomonas syringae pv. tomato (strain ATCC BAA-871 / DC3000).